We begin with the raw amino-acid sequence, 298 residues long: Zinc import ATP-binding protein ZnuC (298 aa).

One can recognise an ABC transporter domain in the interval 17–232 (IELRNAGVYR…PEYVRLFGSR (216 aa)). 49–56 (GQNGAGKS) serves as a coordination point for ATP. Positions 273–298 (RGHCHVEDGHHHDHEHHHHEGGQPRA) are disordered. Positions 276–298 (CHVEDGHHHDHEHHHHEGGQPRA) are enriched in basic and acidic residues.

It belongs to the ABC transporter superfamily. Zinc importer (TC 3.A.1.15.5) family. In terms of assembly, the complex is composed of two ATP-binding proteins (ZnuC), two transmembrane proteins (ZnuB) and a solute-binding protein (ZnuA).

The protein resides in the cell inner membrane. The catalysed reaction is Zn(2+)(out) + ATP(in) + H2O(in) = Zn(2+)(in) + ADP(in) + phosphate(in) + H(+)(in). Functionally, part of the ABC transporter complex ZnuABC involved in zinc import. Responsible for energy coupling to the transport system. This Brucella melitensis biotype 1 (strain ATCC 23456 / CCUG 17765 / NCTC 10094 / 16M) protein is Zinc import ATP-binding protein ZnuC.